Reading from the N-terminus, the 500-residue chain is Probable malate:quinone oxidoreductase (500 aa).

It belongs to the MQO family. FAD is required as a cofactor.

It catalyses the reaction (S)-malate + a quinone = a quinol + oxaloacetate. The protein operates within carbohydrate metabolism; tricarboxylic acid cycle; oxaloacetate from (S)-malate (quinone route): step 1/1. The chain is Probable malate:quinone oxidoreductase from Bacillus anthracis (strain A0248).